We begin with the raw amino-acid sequence, 122 residues long: Large ribosomal subunit protein uL14 (122 aa).

This sequence belongs to the universal ribosomal protein uL14 family. In terms of assembly, part of the 50S ribosomal subunit. Forms a cluster with proteins L3 and L19. In the 70S ribosome, L14 and L19 interact and together make contacts with the 16S rRNA in bridges B5 and B8.

Functionally, binds to 23S rRNA. Forms part of two intersubunit bridges in the 70S ribosome. The polypeptide is Large ribosomal subunit protein uL14 (Leifsonia xyli subsp. xyli (strain CTCB07)).